Reading from the N-terminus, the 77-residue chain is MARVCEVTGKGPMVGNKVSHANNRTKRRFLPNLQYRRFWVETENRWIRLRISNAGLRLIDKNGIDVVLADLRARGQA.

Belongs to the bacterial ribosomal protein bL28 family.

The polypeptide is Large ribosomal subunit protein bL28 (Albidiferax ferrireducens (strain ATCC BAA-621 / DSM 15236 / T118) (Rhodoferax ferrireducens)).